A 688-amino-acid chain; its full sequence is Methionine--tRNA ligase (688 aa).

The short motif at Pro-15 to His-25 is the 'HIGH' region element. The Zn(2+) site is built by Cys-146, Cys-149, Cys-159, and Cys-162. Positions Lys-332–Ser-336 match the 'KMSKS' region motif. Residue Lys-335 participates in ATP binding. The disordered stretch occupies residues Ala-552 to Ser-576. The span at Ala-554–Thr-564 shows a compositional bias: basic and acidic residues. Residues Asp-587–Lys-688 enclose the tRNA-binding domain.

The protein belongs to the class-I aminoacyl-tRNA synthetase family. MetG type 1 subfamily. In terms of assembly, homodimer. Zn(2+) is required as a cofactor.

The protein localises to the cytoplasm. It catalyses the reaction tRNA(Met) + L-methionine + ATP = L-methionyl-tRNA(Met) + AMP + diphosphate. Is required not only for elongation of protein synthesis but also for the initiation of all mRNA translation through initiator tRNA(fMet) aminoacylation. The chain is Methionine--tRNA ligase from Shewanella woodyi (strain ATCC 51908 / MS32).